Reading from the N-terminus, the 635-residue chain is Nuclear distribution protein nudE homolog 1 (635 aa).

Residues 14-192 (EKEIKHWKSK…TILRDLVTRS (179 aa)) adopt a coiled-coil conformation. 5 disordered regions span residues 35-63 (ESSL…NKTI), 200-267 (TMAS…LSRD), 279-328 (VLDD…SARA), 389-504 (SRVV…DHDP), and 516-635 (AAQA…TETF). Residues 43 to 56 (ESSKELEQEMEKEL) show a composition bias toward basic and acidic residues. 2 stretches are compositionally biased toward polar residues: residues 201–224 (MASS…SPIK) and 237–246 (SRQALSSPVT). The segment covering 280 to 299 (LDDSPTATTTSAAPTRSSTL) has biased composition (low complexity). Polar residues-rich tracts occupy residues 314–326 (ASTS…SPSA) and 411–428 (GSPS…TSTP). The span at 516–541 (AAQASVAKRRTSMSGSGMSHSASHGS) shows a compositional bias: low complexity. Polar residues-rich tracts occupy residues 547–571 (SGST…SSMT) and 580–619 (SKRT…PAQT). A compositionally biased stretch (low complexity) spans 620–635 (LSRSRSSSLGSETETF).

It belongs to the nudE family. In terms of assembly, self-associates. Interacts with PAC1.

The protein resides in the cytoplasm. It is found in the cytoskeleton. Required for nuclear migration. The chain is Nuclear distribution protein nudE homolog 1 (NDE1) from Mycosarcoma maydis (Corn smut fungus).